Here is a 335-residue protein sequence, read N- to C-terminus: Cholinephosphotransferase 1 (335 aa).

2 helical membrane passes run 53 to 73 (PNAI…PLIA) and 84 to 108 (FWAY…GKQA). CDP-choline is bound at residue N54. D101 and D104 together coordinate Mg(2+). R109 serves as a coordination point for CDP-choline. Transmembrane regions (helical) follow at residues 116 to 140 (PLGE…SCIA), 151 to 169 (FFCC…WQTY), 181 to 197 (VTEV…VSAF), 213 to 238 (ELKF…RIIF), 267 to 276 (IGPGLLFLDQ), and 284 to 313 (EYVV…IAAH). A Mg(2+)-binding site is contributed by D122. H123 acts as the Proton acceptor in catalysis. A Mg(2+)-binding site is contributed by D126.

The protein belongs to the CDP-alcohol phosphatidyltransferase class-I family. Mg(2+) serves as cofactor. Requires Mn(2+) as cofactor.

The protein resides in the golgi apparatus membrane. The enzyme catalyses CDP-choline + a 1,2-diacyl-sn-glycerol = a 1,2-diacyl-sn-glycero-3-phosphocholine + CMP + H(+). It carries out the reaction 1-octadecanoyl-2-(5Z,8Z,11Z,14Z-eicosatetraenoyl)-sn-glycerol + CDP-choline = 1-octadecanoyl-2-(5Z,8Z,11Z,14Z-eicosatetraenoyl)-sn-glycero-3-phosphocholine + CMP + H(+). The catalysed reaction is 1-hexadecanoyl-2-(9Z-octadecenoyl)-sn-glycerol + CDP-choline = 1-hexadecanoyl-2-(9Z-octadecenoyl)-sn-glycero-3-phosphocholine + CMP + H(+). It catalyses the reaction 1-hexadecanoyl-2-(4Z,7Z,10Z,13Z,16Z,19Z-docosahexaenoyl)-sn-glycerol + CDP-choline = 1-hexadecanoyl-2-(4Z,7Z,10Z,13Z,16Z,19Z-docosahexaenoyl)-sn-glycero-3-phosphocholine + CMP + H(+). The enzyme catalyses 1,2-dioctanoyl-sn-glycerol + CDP-choline = 1,2-dioctanoyl-sn-glycero-3-phosphocholine + CMP + H(+). The protein operates within phospholipid metabolism; phosphatidylcholine biosynthesis; phosphatidylcholine from phosphocholine: step 2/2. Catalyzes the final step of de novo phosphatidylcholine (PC) synthesis, i.e. the transfer of choline phosphate from CDP-choline to the free hydroxyl of a diacylglycerol (DAG), producing a PC. It thereby plays a central role in the formation and maintenance of vesicular membranes. This Gallus gallus (Chicken) protein is Cholinephosphotransferase 1 (CHPT1).